The sequence spans 140 residues: Putative pre-16S rRNA nuclease (140 aa).

Belongs to the YqgF nuclease family.

It is found in the cytoplasm. Functionally, could be a nuclease involved in processing of the 5'-end of pre-16S rRNA. The sequence is that of Putative pre-16S rRNA nuclease from Actinobacillus succinogenes (strain ATCC 55618 / DSM 22257 / CCUG 43843 / 130Z).